Reading from the N-terminus, the 341-residue chain is Phosphate acyltransferase (341 aa).

Belongs to the PlsX family. In terms of assembly, homodimer. Probably interacts with PlsY.

It localises to the cytoplasm. The enzyme catalyses a fatty acyl-[ACP] + phosphate = an acyl phosphate + holo-[ACP]. It participates in lipid metabolism; phospholipid metabolism. In terms of biological role, catalyzes the reversible formation of acyl-phosphate (acyl-PO(4)) from acyl-[acyl-carrier-protein] (acyl-ACP). This enzyme utilizes acyl-ACP as fatty acyl donor, but not acyl-CoA. The sequence is that of Phosphate acyltransferase from Vibrio cholerae serotype O1 (strain ATCC 39541 / Classical Ogawa 395 / O395).